The following is a 215-amino-acid chain: Glycerol-3-phosphate acyltransferase (215 aa).

6 helical membrane passes run 3–23 (LILL…LWIG), 42–61 (TNTF…LIDI), 68–90 (TLLP…FAVL), 110–130 (AGVL…VFVL), 134–154 (LFSM…ISVL), and 162–182 (LLPG…AIII).

This sequence belongs to the PlsY family. Probably interacts with PlsX.

Its subcellular location is the cell membrane. It carries out the reaction an acyl phosphate + sn-glycerol 3-phosphate = a 1-acyl-sn-glycero-3-phosphate + phosphate. It functions in the pathway lipid metabolism; phospholipid metabolism. Its function is as follows. Catalyzes the transfer of an acyl group from acyl-phosphate (acyl-PO(4)) to glycerol-3-phosphate (G3P) to form lysophosphatidic acid (LPA). This enzyme utilizes acyl-phosphate as fatty acyl donor, but not acyl-CoA or acyl-ACP. This Streptococcus equi subsp. zooepidemicus (strain H70) protein is Glycerol-3-phosphate acyltransferase.